The following is a 540-amino-acid chain: (13S,14R)-13-O-acetyl-1-hydroxy-N-methylcanadine 8-hydroxylase CYP82X1 (540 aa).

Residues 15-35 form a helical membrane-spanning segment; that stretch reads FSIILVTTVSIVLLYSVFFWV. Heme is bound at residue cysteine 483.

The protein belongs to the cytochrome P450 family. Requires heme as cofactor. Highly expressed in capsules. Expressed is stems.

It localises to the membrane. It catalyses the reaction (13S,14R)-13-O-acetyl-1-hydroxy-N-methylcanadine + reduced [NADPH--hemoprotein reductase] + O2 = (13S,14R)-13-O-acetyl-1,8-dihydroxy-N-methylcanadine + oxidized [NADPH--hemoprotein reductase] + H2O + H(+). It participates in alkaloid biosynthesis. Its function is as follows. Cytochrome P450 involved in the biosynthesis of the benzylisoquinoline alkaloid noscapine. Converts (13S,14R)-13-O-acetyl-1-hydroxy-N-methylcanadine to (13S,14R)-13-O-acetyl-1,8-dihydroxy-N-methylcanadine. In Papaver somniferum (Opium poppy), this protein is (13S,14R)-13-O-acetyl-1-hydroxy-N-methylcanadine 8-hydroxylase CYP82X1.